Reading from the N-terminus, the 342-residue chain is 4-hydroxy-3-methylbut-2-enyl diphosphate reductase (342 aa).

[4Fe-4S] cluster is bound at residue Cys47. Residues His78 and His111 each contribute to the (2E)-4-hydroxy-3-methylbut-2-enyl diphosphate site. Dimethylallyl diphosphate contacts are provided by His78 and His111. Isopentenyl diphosphate is bound by residues His78 and His111. Cys133 contacts [4Fe-4S] cluster. Position 161 (His161) interacts with (2E)-4-hydroxy-3-methylbut-2-enyl diphosphate. Residue His161 coordinates dimethylallyl diphosphate. His161 contributes to the isopentenyl diphosphate binding site. The Proton donor role is filled by Glu163. Thr201 contacts (2E)-4-hydroxy-3-methylbut-2-enyl diphosphate. Cys231 lines the [4Fe-4S] cluster pocket. 4 residues coordinate (2E)-4-hydroxy-3-methylbut-2-enyl diphosphate: Ser259, Ser260, Asn261, and Ser303. 4 residues coordinate dimethylallyl diphosphate: Ser259, Ser260, Asn261, and Ser303. 4 residues coordinate isopentenyl diphosphate: Ser259, Ser260, Asn261, and Ser303.

Belongs to the IspH family. It depends on [4Fe-4S] cluster as a cofactor.

It carries out the reaction isopentenyl diphosphate + 2 oxidized [2Fe-2S]-[ferredoxin] + H2O = (2E)-4-hydroxy-3-methylbut-2-enyl diphosphate + 2 reduced [2Fe-2S]-[ferredoxin] + 2 H(+). The catalysed reaction is dimethylallyl diphosphate + 2 oxidized [2Fe-2S]-[ferredoxin] + H2O = (2E)-4-hydroxy-3-methylbut-2-enyl diphosphate + 2 reduced [2Fe-2S]-[ferredoxin] + 2 H(+). It participates in isoprenoid biosynthesis; dimethylallyl diphosphate biosynthesis; dimethylallyl diphosphate from (2E)-4-hydroxy-3-methylbutenyl diphosphate: step 1/1. It functions in the pathway isoprenoid biosynthesis; isopentenyl diphosphate biosynthesis via DXP pathway; isopentenyl diphosphate from 1-deoxy-D-xylulose 5-phosphate: step 6/6. In terms of biological role, catalyzes the conversion of 1-hydroxy-2-methyl-2-(E)-butenyl 4-diphosphate (HMBPP) into a mixture of isopentenyl diphosphate (IPP) and dimethylallyl diphosphate (DMAPP). Acts in the terminal step of the DOXP/MEP pathway for isoprenoid precursor biosynthesis. This Anaplasma marginale (strain Florida) protein is 4-hydroxy-3-methylbut-2-enyl diphosphate reductase.